A 350-amino-acid chain; its full sequence is tRNA uridine(34) hydroxylase (350 aa).

The 95-residue stretch at 146 to 240 (DDPDALFIDM…YARKAREQGL (95 aa)) folds into the Rhodanese domain. C200 acts as the Cysteine persulfide intermediate in catalysis.

This sequence belongs to the TrhO family.

The enzyme catalyses uridine(34) in tRNA + AH2 + O2 = 5-hydroxyuridine(34) in tRNA + A + H2O. Functionally, catalyzes oxygen-dependent 5-hydroxyuridine (ho5U) modification at position 34 in tRNAs. The polypeptide is tRNA uridine(34) hydroxylase (Shigella flexneri serotype 5b (strain 8401)).